The chain runs to 385 residues: Nod factor hydrolase protein 1 (385 aa).

The signal sequence occupies residues 1–21 (MANFLKLKQFLTLVLILLALA). A GH18 domain is found at 36–385 (RVKGIYWIEN…TASKAWRPES (350 aa)). N115 and N134 each carry an N-linked (GlcNAc...) asparagine glycan. Residue E153 is the Proton donor of the active site. N-linked (GlcNAc...) asparagine glycans are attached at residues N233 and N247.

This sequence belongs to the glycosyl hydrolase 18 family. Chitinase class V subfamily.

Symbiotic enzyme that hydrolytically inactivates Nod factors (NFs) with a C16:2 acyl chain produced by the microsymbiont Sinorhizobium meliloti. NFs are lipo-chitooligosaccharide signaling molecules produced by nitrogen-fixing rhizobia to initiate nodulation (symbiosis) on the roots of legumes. Controls NF hydrolysis at the stage of root hair infection. Involved in the regulation of growth and branching of mature nodules. Modulates NF levels and signaling to complete transition of infected nodules to functional nitrogen-fixing organs. Lacks chitinase activity in vitro toward glycol chitin, carboxymethyl-chitin, colloidal chitin, and the chitin oligosaccharides (N-acetylglucosamine) (GlcNAc)6 and (GlcNAc)5. In Medicago truncatula (Barrel medic), this protein is Nod factor hydrolase protein 1.